A 312-amino-acid chain; its full sequence is tRNA-cytidine(32) 2-sulfurtransferase (312 aa).

The PP-loop motif signature appears at 47–52 (SGGKDS). [4Fe-4S] cluster-binding residues include cysteine 122, cysteine 125, and cysteine 213.

Belongs to the TtcA family. In terms of assembly, homodimer. Requires Mg(2+) as cofactor. [4Fe-4S] cluster serves as cofactor.

Its subcellular location is the cytoplasm. It carries out the reaction cytidine(32) in tRNA + S-sulfanyl-L-cysteinyl-[cysteine desulfurase] + AH2 + ATP = 2-thiocytidine(32) in tRNA + L-cysteinyl-[cysteine desulfurase] + A + AMP + diphosphate + H(+). It functions in the pathway tRNA modification. In terms of biological role, catalyzes the ATP-dependent 2-thiolation of cytidine in position 32 of tRNA, to form 2-thiocytidine (s(2)C32). The sulfur atoms are provided by the cysteine/cysteine desulfurase (IscS) system. This chain is tRNA-cytidine(32) 2-sulfurtransferase, found in Actinobacillus succinogenes (strain ATCC 55618 / DSM 22257 / CCUG 43843 / 130Z).